A 200-amino-acid chain; its full sequence is 3-isopropylmalate dehydratase small subunit 2 (200 aa).

The protein belongs to the LeuD family. LeuD type 1 subfamily. As to quaternary structure, heterodimer of LeuC and LeuD.

It catalyses the reaction (2R,3S)-3-isopropylmalate = (2S)-2-isopropylmalate. The protein operates within amino-acid biosynthesis; L-leucine biosynthesis; L-leucine from 3-methyl-2-oxobutanoate: step 2/4. Its function is as follows. Catalyzes the isomerization between 2-isopropylmalate and 3-isopropylmalate, via the formation of 2-isopropylmaleate. The sequence is that of 3-isopropylmalate dehydratase small subunit 2 from Mannheimia succiniciproducens (strain KCTC 0769BP / MBEL55E).